The primary structure comprises 374 residues: MNFEIHNEEIDHKLEAYDYILDETLIANKPSKVRHESRLMIVRDSSLEEDFTTNKYTKNLLDELRKGDLVVVNDTKVMKARLKVELENGKLVELLVLEKADQSTWLCLARPAKKLKINSQLNLKSSLAKDIKLHISGTDKETGGRFIKFPENINDLISMNNLLDIYGETPLPPYIKSAEEESFHENSYQTEYASNPGAVAAPTAGLHLSKSLISNLKKKGILVMPITLHVGYGTFKPIDQEDLSNLKLHKEWVRVSSEVVEEIKRVKKTDRRVIAIGTTSVRALESCYSYEMGDLIPIDKYVDLVIKPGYKFKVVDGLLTNFHLPKSSLLLLVSAMIGRERLLNLYKKAIREKFRFFSYGDAMYISPDSFLVKK.

It belongs to the QueA family.

It is found in the cytoplasm. The catalysed reaction is 7-aminomethyl-7-carbaguanosine(34) in tRNA + S-adenosyl-L-methionine = epoxyqueuosine(34) in tRNA + adenine + L-methionine + 2 H(+). It participates in tRNA modification; tRNA-queuosine biosynthesis. Synthesizes oQ from preQ1 in a single S-adenosylmethionine-requiring step. The ribosyl moiety of AdoMet is transferred and isomerized to the epoxycyclopentane residue of oQ. In Prochlorococcus marinus subsp. pastoris (strain CCMP1986 / NIES-2087 / MED4), this protein is S-adenosylmethionine:tRNA ribosyltransferase-isomerase (queA).